Reading from the N-terminus, the 215-residue chain is Large ribosomal subunit protein uL3 (215 aa).

A disordered region spans residues 136 to 155 (GVSISHRSHGSTGQRQDPGK). Gln-151 is modified (N5-methylglutamine).

This sequence belongs to the universal ribosomal protein uL3 family. Part of the 50S ribosomal subunit. Forms a cluster with proteins L14 and L19. Methylated by PrmB.

One of the primary rRNA binding proteins, it binds directly near the 3'-end of the 23S rRNA, where it nucleates assembly of the 50S subunit. The sequence is that of Large ribosomal subunit protein uL3 from Rickettsia typhi (strain ATCC VR-144 / Wilmington).